We begin with the raw amino-acid sequence, 430 residues long: Adenylosuccinate synthetase (430 aa).

GTP contacts are provided by residues 13-19 and 41-43; these read GDEGKGK and GHT. The active-site Proton acceptor is the D14. Mg(2+) is bound by residues D14 and G41. IMP-binding positions include 14–17, 39–42, T130, R144, Q225, T240, and R304; these read DEGK and NAGH. H42 (proton donor) is an active-site residue. A substrate-binding site is contributed by 300–306; sequence ASTGRPR. GTP is bound by residues R306, 332–334, and 414–416; these read KLD and STG.

Belongs to the adenylosuccinate synthetase family. As to quaternary structure, homodimer. Mg(2+) serves as cofactor.

It is found in the cytoplasm. It carries out the reaction IMP + L-aspartate + GTP = N(6)-(1,2-dicarboxyethyl)-AMP + GDP + phosphate + 2 H(+). Its pathway is purine metabolism; AMP biosynthesis via de novo pathway; AMP from IMP: step 1/2. In terms of biological role, plays an important role in the de novo pathway of purine nucleotide biosynthesis. Catalyzes the first committed step in the biosynthesis of AMP from IMP. This Xylella fastidiosa (strain M12) protein is Adenylosuccinate synthetase.